A 250-amino-acid chain; its full sequence is Tumor necrosis factor ligand superfamily member 13 (250 aa).

The propeptide occupies 1 to 104 (MPASSPFLLA…ENGERSRKRR (104 aa)). Disordered stretches follow at residues 61-82 (EVSR…PWQS) and 89-108 (DALE…AVLT). In terms of domain architecture, THD spans 116–250 (SVLHLVPINA…HGTFLGFVKL (135 aa)). An N-linked (GlcNAc...) asparagine glycan is attached at Asn124. A disulfide bridge connects residues Cys196 and Cys211.

It belongs to the tumor necrosis factor family. As to quaternary structure, homotrimer. In terms of processing, the precursor is cleaved by furin. As to expression, expressed at high levels in transformed cell lines, cancers of colon, thyroid, lymphoid tissues and specifically expressed in monocytes and macrophages.

The protein resides in the secreted. In terms of biological role, cytokine that binds to TNFRSF13B/TACI and to TNFRSF17/BCMA. Plays a role in the regulation of tumor cell growth. May be involved in monocyte/macrophage-mediated immunological processes. In Homo sapiens (Human), this protein is Tumor necrosis factor ligand superfamily member 13 (TNFSF13).